We begin with the raw amino-acid sequence, 380 residues long: Succinyl-diaminopimelate desuccinylase (380 aa).

His70 serves as a coordination point for Zn(2+). The active site involves Asp72. Position 103 (Asp103) interacts with Zn(2+). Glu137 functions as the Proton acceptor in the catalytic mechanism. Zn(2+) is bound by residues Glu138, Glu166, and His352.

The protein belongs to the peptidase M20A family. DapE subfamily. In terms of assembly, homodimer. It depends on Zn(2+) as a cofactor. Co(2+) is required as a cofactor.

The catalysed reaction is N-succinyl-(2S,6S)-2,6-diaminopimelate + H2O = (2S,6S)-2,6-diaminopimelate + succinate. The protein operates within amino-acid biosynthesis; L-lysine biosynthesis via DAP pathway; LL-2,6-diaminopimelate from (S)-tetrahydrodipicolinate (succinylase route): step 3/3. Its function is as follows. Catalyzes the hydrolysis of N-succinyl-L,L-diaminopimelic acid (SDAP), forming succinate and LL-2,6-diaminopimelate (DAP), an intermediate involved in the bacterial biosynthesis of lysine and meso-diaminopimelic acid, an essential component of bacterial cell walls. This is Succinyl-diaminopimelate desuccinylase from Azoarcus sp. (strain BH72).